The primary structure comprises 626 residues: ATP-dependent rRNA helicase spb4 (626 aa).

Residues 14–42 carry the Q motif motif; it reads WDALTPSLAEWVLDAISSMGFEKMTPVQA. The 202-residue stretch at 45 to 246 folds into the Helicase ATP-binding domain; that stretch reads IPLFMGNKDV…RVGLRNPVKI (202 aa). Residue 58-65 participates in ATP binding; it reads AVTGSGKT. Residues 194–197 carry the DEAD box motif; that stretch reads DEAD. One can recognise a Helicase C-terminal domain in the interval 279–437; sequence ALLSLLSQLE…TTGEAAKILI (159 aa). Residues 553–599 form a disordered region; sequence QREAWSQKHEKQDLKELKREKKKRKREIERLEKMTDEEKKEEQAKEK. Basic and acidic residues-rich tracts occupy residues 554–571 and 578–599; these read REAWSQKHEKQDLKELKR and REIERLEKMTDEEKKEEQAKEK. Residues 558 to 620 adopt a coiled-coil conformation; the sequence is SQKHEKQDLK…RKIEDDADVE (63 aa).

The protein belongs to the DEAD box helicase family. DDX55/SPB4 subfamily. As to quaternary structure, component of pre-60S ribosomal complexes.

It is found in the nucleus. The protein resides in the nucleolus. It carries out the reaction ATP + H2O = ADP + phosphate + H(+). Its function is as follows. ATP-binding RNA helicase involved in the biogenesis of 60S ribosomal subunits. Binds 90S pre-ribosomal particles and dissociates from pre-60S ribosomal particles after processing of 27SB pre-rRNA. Required for the normal formation of 18S rRNA through the processing of pre-rRNAs at sites A0, A1 and A2, and the normal formation of 25S and 5.8S rRNAs through the processing of pre-rRNAs at sites C1 and C2. The chain is ATP-dependent rRNA helicase spb4 from Botryotinia fuckeliana (strain B05.10) (Noble rot fungus).